The chain runs to 194 residues: Imidazoleglycerol-phosphate dehydratase (194 aa).

It belongs to the imidazoleglycerol-phosphate dehydratase family.

The protein localises to the cytoplasm. The enzyme catalyses D-erythro-1-(imidazol-4-yl)glycerol 3-phosphate = 3-(imidazol-4-yl)-2-oxopropyl phosphate + H2O. It participates in amino-acid biosynthesis; L-histidine biosynthesis; L-histidine from 5-phospho-alpha-D-ribose 1-diphosphate: step 6/9. In Streptococcus thermophilus (strain ATCC BAA-491 / LMD-9), this protein is Imidazoleglycerol-phosphate dehydratase.